Consider the following 508-residue polypeptide: Light-independent protochlorophyllide reductase subunit B (508 aa).

Asp36 contributes to the [4Fe-4S] cluster binding site. Asp294 functions as the Proton donor in the catalytic mechanism. 429 to 430 (GM) provides a ligand contact to substrate.

It belongs to the ChlB/BchB/BchZ family. Protochlorophyllide reductase is composed of three subunits; ChlL, ChlN and ChlB. Forms a heterotetramer of two ChlB and two ChlN subunits. [4Fe-4S] cluster is required as a cofactor.

It carries out the reaction chlorophyllide a + oxidized 2[4Fe-4S]-[ferredoxin] + 2 ADP + 2 phosphate = protochlorophyllide a + reduced 2[4Fe-4S]-[ferredoxin] + 2 ATP + 2 H2O. It functions in the pathway porphyrin-containing compound metabolism; chlorophyll biosynthesis (light-independent). Its function is as follows. Component of the dark-operative protochlorophyllide reductase (DPOR) that uses Mg-ATP and reduced ferredoxin to reduce ring D of protochlorophyllide (Pchlide) to form chlorophyllide a (Chlide). This reaction is light-independent. The NB-protein (ChlN-ChlB) is the catalytic component of the complex. This is Light-independent protochlorophyllide reductase subunit B from Rippkaea orientalis (strain PCC 8801 / RF-1) (Cyanothece sp. (strain PCC 8801)).